The sequence spans 175 residues: Large ribosomal subunit protein uL30 (175 aa).

This sequence belongs to the universal ribosomal protein uL30 family. Part of the 50S ribosomal subunit.

This chain is Large ribosomal subunit protein uL30, found in Pyrobaculum neutrophilum (strain DSM 2338 / JCM 9278 / NBRC 100436 / V24Sta) (Thermoproteus neutrophilus).